Here is a 318-residue protein sequence, read N- to C-terminus: Biotin synthase (318 aa).

Residues 44 to 270 form the Radical SAM core domain; the sequence is LCGDAVNLCS…INPTANIRLA (227 aa). [4Fe-4S] cluster contacts are provided by cysteine 62, cysteine 66, and cysteine 69. Residues serine 106, cysteine 138, cysteine 198, and arginine 268 each coordinate [2Fe-2S] cluster.

This sequence belongs to the radical SAM superfamily. Biotin synthase family. Homodimer. Requires [4Fe-4S] cluster as cofactor. It depends on [2Fe-2S] cluster as a cofactor.

The enzyme catalyses (4R,5S)-dethiobiotin + (sulfur carrier)-SH + 2 reduced [2Fe-2S]-[ferredoxin] + 2 S-adenosyl-L-methionine = (sulfur carrier)-H + biotin + 2 5'-deoxyadenosine + 2 L-methionine + 2 oxidized [2Fe-2S]-[ferredoxin]. It participates in cofactor biosynthesis; biotin biosynthesis; biotin from 7,8-diaminononanoate: step 2/2. In terms of biological role, catalyzes the conversion of dethiobiotin (DTB) to biotin by the insertion of a sulfur atom into dethiobiotin via a radical-based mechanism. The polypeptide is Biotin synthase (Alkaliphilus metalliredigens (strain QYMF)).